Reading from the N-terminus, the 261-residue chain is Pimeloyl-[acyl-carrier protein] methyl ester esterase (261 aa).

The 229-residue stretch at 15–243 (HLVLLHGWGL…AAHAPFISHP (229 aa)) folds into the AB hydrolase-1 domain. Substrate is bound by residues tryptophan 22, 83 to 84 (SL), and 144 to 148 (FLALQ). Catalysis depends on serine 83, which acts as the Nucleophile. Residues aspartate 208 and histidine 236 contribute to the active site. Histidine 236 provides a ligand contact to substrate.

It belongs to the AB hydrolase superfamily. Carboxylesterase BioH family. In terms of assembly, monomer.

It is found in the cytoplasm. The catalysed reaction is 6-carboxyhexanoyl-[ACP] methyl ester + H2O = 6-carboxyhexanoyl-[ACP] + methanol + H(+). It functions in the pathway cofactor biosynthesis; biotin biosynthesis. Functionally, the physiological role of BioH is to remove the methyl group introduced by BioC when the pimeloyl moiety is complete. It allows to synthesize pimeloyl-ACP via the fatty acid synthetic pathway through the hydrolysis of the ester bonds of pimeloyl-ACP esters. This is Pimeloyl-[acyl-carrier protein] methyl ester esterase from Proteus mirabilis (strain HI4320).